The chain runs to 290 residues: Putative heme oxygenase 3 (290 aa).

Residues 1 to 12 (MSSEVETAEAVD) are compositionally biased toward acidic residues. Residues 1–33 (MSSEVETAEAVDESEKNSMASEKENHSKIADFS) form a disordered region. A compositionally biased stretch (basic and acidic residues) spans 13 to 33 (ESEKNSMASEKENHSKIADFS). 2 HRM repeats span residues 238–243 (KCPFNA) and 255–260 (NCPFQM).

It belongs to the heme oxygenase family. Found in the spleen, liver, thymus, prostate, heart, kidney, brain and testis.

It catalyses the reaction heme b + 3 reduced [NADPH--hemoprotein reductase] + 3 O2 = biliverdin IXalpha + CO + Fe(2+) + 3 oxidized [NADPH--hemoprotein reductase] + 3 H2O + H(+). Functionally, heme oxygenase cleaves the heme ring at the alpha methene bridge to form biliverdin. Biliverdin is subsequently converted to bilirubin by biliverdin reductase. Heme oxygenase 3 could be implicated in some heme-dependent regulatory role in the cell. This chain is Putative heme oxygenase 3 (Hmox3), found in Rattus norvegicus (Rat).